A 1122-amino-acid chain; its full sequence is Phytochrome A (1122 aa).

Residues 1–11 (MSGSRPTQSSE) show a composition bias toward polar residues. The segment at 1–21 (MSGSRPTQSSEGSRRSRHSAR) is disordered. The GAF domain occupies 218 to 402 (SMERLCDTMV…VFAIHVNKEV (185 aa)). A phytochromobilin-binding site is contributed by C323. The PAS 1 domain occupies 618 to 688 (VTSEMVRLIE…RMLENALEGT (71 aa)). Residues 695 to 747 (FEIKTHLSRADAGPISLVVNACASRDLHENVVGVCFVAHDLTGQKTVMDKFTR) enclose the PAC domain. In terms of domain architecture, PAS 2 spans 748 to 822 (IEGDYKAIIQ…KNQEAFVNLG (75 aa)). Positions 902–1119 (YIKRQIRNPL…SFIITAELAA (218 aa)) constitute a Histidine kinase domain.

This sequence belongs to the phytochrome family. In terms of assembly, homodimer. Interacts with NDPK2 and PKS4. Stabilized by interactions with PAPP5 and FYPP3 which are enhanced in the phosphorylated Pfr form. Interacts with COP1/SPA1 complex. Binds, via its photosensory domain, to PTAC12/HMR when photoactivated; this interaction stimulates its localization to photobodies. Interacts with FHY1, FHL and FHY3, especially upon far-red (FR) light illumination; when underphosphorylated. Forms PHYA/FHY1/HFR1 complex. Binds to PIF3/PAP3. Post-translationally, phosphorylated. In terms of processing, contains one covalently linked phytochromobilin chromophore. In terms of tissue distribution, expressed in fruits, flowers, leaves, stems, seedlings and roots.

The protein resides in the cytoplasm. The protein localises to the nucleus. It is found in the nucleoplasm. It localises to the nucleus speckle. Regulatory photoreceptor which exists in two forms that are reversibly interconvertible by light: the Pr form that absorbs maximally in the red region of the spectrum and the Pfr form that absorbs maximally in the far-red region. Photoconversion of Pr to Pfr induces an array of morphogenetic responses, whereas reconversion of Pfr to Pr cancels the induction of those responses. Pfr controls the expression of a number of nuclear genes including those encoding the small subunit of ribulose-bisphosphate carboxylase, chlorophyll A/B binding protein, protochlorophyllide reductase, rRNA, etc. It also controls the expression of its own gene(s) in a negative feedback fashion. Involved in the flowering time regulation. Can phosphorylate FHY1 and, possibly, FHL, in red light conditions; this inactivates their co-shuttling to the nucleus. Regulates phototropic responses both in the nucleus (e.g. hypocotyl elongation and cotyledon opening under high-irradiance conditions and seed germination under very-low-fluence conditions) and in the cytoplasm (e.g. negative gravitropism in blue light and red-enhanced phototropism). Promotes seed germination, suppression of hypocotyl elongation, and randomization of hypocotyl growth orientation in far-red light; these responses to far-red light are repressed by UNE10/PIF8. Stabilizes UNE10/PIF8 but sequesters PIF3/PAP3 from its target genes promoters in far-red light. This chain is Phytochrome A, found in Arabidopsis thaliana (Mouse-ear cress).